Here is a 1728-residue protein sequence, read N- to C-terminus: U3 small nucleolar RNA-associated protein 10 (1728 aa).

HEAT repeat units follow at residues 540–578 (DKDF…LVKE), 881–926 (PANH…MMPA), 986–1024 (FMGS…AYEH), 1191–1229 (LLSI…SEST), 1235–1274 (REAL…KYGK), 1622–1662 (ADAT…GQAA), and 1683–1721 (LQAL…KLGE).

Belongs to the HEATR1/UTP10 family. In terms of assembly, component of the ribosomal small subunit (SSU) processome.

It is found in the nucleus. Its subcellular location is the nucleolus. Involved in nucleolar processing of pre-18S ribosomal RNA. Involved in ribosome biosynthesis. The sequence is that of U3 small nucleolar RNA-associated protein 10 from Chaetomium globosum (strain ATCC 6205 / CBS 148.51 / DSM 1962 / NBRC 6347 / NRRL 1970) (Soil fungus).